The chain runs to 441 residues: Chromosome partition protein MukF (441 aa).

The segment at 208–236 is leucine-zipper; that stretch reads LDETSGNLRELQDTLNAAGDKLQAQLLRI.

The protein belongs to the MukF family. As to quaternary structure, interacts, and probably forms a ternary complex, with MukE and MukB via its C-terminal region. The complex formation is stimulated by calcium or magnesium. It is required for an interaction between MukE and MukB.

Its subcellular location is the cytoplasm. It localises to the nucleoid. Functionally, involved in chromosome condensation, segregation and cell cycle progression. May participate in facilitating chromosome segregation by condensation DNA from both sides of a centrally located replisome during cell division. Not required for mini-F plasmid partitioning. Probably acts via its interaction with MukB and MukE. Overexpression results in anucleate cells. It has a calcium binding activity. This Pasteurella multocida (strain Pm70) protein is Chromosome partition protein MukF.